Consider the following 1104-residue polypeptide: Lon protease homolog, mitochondrial (1104 aa).

The N-terminal 58 residues, 1-58, are a transit peptide targeting the mitochondrion; it reads MLPLRAFARLAQRPRLSRPTQLARSSLPRPSPSRPAAHYLALAPAPSTRFLHSSPPVL. Residues 8 to 144 are disordered; sequence ARLAQRPRLS…PGAGGPKEVA (137 aa). Low complexity predominate over residues 22 to 46; the sequence is LARSSLPRPSPSRPAAHYLALAPAP. The segment covering 80–103 has biased composition (basic and acidic residues); sequence KQDDQVEKPLPDAESSKSAEERAK. Residues 104–128 are compositionally biased toward low complexity; the sequence is SQSSKPDIKASSSDSVSSSAPAPGS. Positions 129–139 are enriched in gly residues; it reads ADGGSPPGAGG. The Lon N-terminal domain occupies 155–444; sequence VLAIPITHRP…RALVLLKKEL (290 aa). 597 to 604 contacts ATP; sequence GPPGVGKT. The Lon proteolytic domain occupies 895–1082; that stretch reads SPPAGVSTGL…RQVLHEAFRG (188 aa). Catalysis depends on residues S987 and K1030.

Belongs to the peptidase S16 family. In terms of assembly, homohexamer or homoheptamer. Organized in a ring with a central cavity.

It localises to the mitochondrion matrix. It carries out the reaction Hydrolysis of proteins in presence of ATP.. Its function is as follows. ATP-dependent serine protease that mediates the selective degradation of misfolded, unassembled or oxidatively damaged polypeptides as well as certain short-lived regulatory proteins in the mitochondrial matrix. May also have a chaperone function in the assembly of inner membrane protein complexes. Participates in the regulation of mitochondrial gene expression and in the maintenance of the integrity of the mitochondrial genome. Binds to mitochondrial DNA in a site-specific manner. This is Lon protease homolog, mitochondrial from Cryptococcus neoformans var. neoformans serotype D (strain B-3501A) (Filobasidiella neoformans).